Consider the following 529-residue polypeptide: Bifunctional purine biosynthesis protein PurH (529 aa).

The 148-residue stretch at 1-148 (MQQRRPIRRA…KNHKDVAIVV (148 aa)) folds into the MGS-like domain.

It belongs to the PurH family.

It carries out the reaction (6R)-10-formyltetrahydrofolate + 5-amino-1-(5-phospho-beta-D-ribosyl)imidazole-4-carboxamide = 5-formamido-1-(5-phospho-D-ribosyl)imidazole-4-carboxamide + (6S)-5,6,7,8-tetrahydrofolate. It catalyses the reaction IMP + H2O = 5-formamido-1-(5-phospho-D-ribosyl)imidazole-4-carboxamide. It functions in the pathway purine metabolism; IMP biosynthesis via de novo pathway; 5-formamido-1-(5-phospho-D-ribosyl)imidazole-4-carboxamide from 5-amino-1-(5-phospho-D-ribosyl)imidazole-4-carboxamide (10-formyl THF route): step 1/1. The protein operates within purine metabolism; IMP biosynthesis via de novo pathway; IMP from 5-formamido-1-(5-phospho-D-ribosyl)imidazole-4-carboxamide: step 1/1. The protein is Bifunctional purine biosynthesis protein PurH of Pectobacterium carotovorum subsp. carotovorum (strain PC1).